We begin with the raw amino-acid sequence, 218 residues long: uncharacterized protein (218 aa).

The N-terminal stretch at 1–21 (MKKFVYKYSFGALLLLSGLSS) is a signal peptide. Residue cysteine 22 is the site of N-palmitoyl cysteine attachment. Cysteine 22 carries the S-diacylglycerol cysteine lipid modification.

It belongs to the chlamydial CPn_0875/CT_734/TC_0107 family.

Its subcellular location is the cell membrane. This is an uncharacterized protein from Chlamydia muridarum (strain MoPn / Nigg).